Reading from the N-terminus, the 840-residue chain is Protein translocase subunit SecA (840 aa).

ATP contacts are provided by residues glutamine 89, 107–111 (GEGKT), and aspartate 514.

This sequence belongs to the SecA family. In terms of assembly, monomer and homodimer. Part of the essential Sec protein translocation apparatus which comprises SecA, SecYEG and auxiliary proteins SecDF-YajC and YidC.

Its subcellular location is the cell inner membrane. It is found in the cytoplasm. The enzyme catalyses ATP + H2O + cellular proteinSide 1 = ADP + phosphate + cellular proteinSide 2.. Functionally, part of the Sec protein translocase complex. Interacts with the SecYEG preprotein conducting channel. Has a central role in coupling the hydrolysis of ATP to the transfer of proteins into and across the cell membrane, serving as an ATP-driven molecular motor driving the stepwise translocation of polypeptide chains across the membrane. The protein is Protein translocase subunit SecA of Blochmanniella floridana.